The primary structure comprises 470 residues: Sulfate adenylyltransferase subunit 1 (470 aa).

Positions K22–T238 constitute a tr-type G domain. Positions G31–S38 are G1. G31–S38 provides a ligand contact to GTP. The segment at G89–D93 is G2. Positions D110–G113 are G3. Residues D110–H114 and N165–D168 contribute to the GTP site. Residues N165–D168 form a G4 region. The segment at S202 to L204 is G5.

This sequence belongs to the TRAFAC class translation factor GTPase superfamily. Classic translation factor GTPase family. CysN/NodQ subfamily. In terms of assembly, heterodimer composed of CysD, the smaller subunit, and CysN.

It carries out the reaction sulfate + ATP + H(+) = adenosine 5'-phosphosulfate + diphosphate. It participates in sulfur metabolism; hydrogen sulfide biosynthesis; sulfite from sulfate: step 1/3. In terms of biological role, with CysD forms the ATP sulfurylase (ATPS) that catalyzes the adenylation of sulfate producing adenosine 5'-phosphosulfate (APS) and diphosphate, the first enzymatic step in sulfur assimilation pathway. APS synthesis involves the formation of a high-energy phosphoric-sulfuric acid anhydride bond driven by GTP hydrolysis by CysN coupled to ATP hydrolysis by CysD. The chain is Sulfate adenylyltransferase subunit 1 from Francisella tularensis subsp. tularensis (strain WY96-3418).